We begin with the raw amino-acid sequence, 229 residues long: Orotidine 5'-phosphate decarboxylase (229 aa).

Residues Asp-10, Lys-32, 59 to 68 (DLKFHDIPNT), Thr-119, Arg-180, Gln-189, Gly-209, and Arg-210 each bind substrate. Lys-61 acts as the Proton donor in catalysis.

It belongs to the OMP decarboxylase family. Type 1 subfamily. Homodimer.

The catalysed reaction is orotidine 5'-phosphate + H(+) = UMP + CO2. It participates in pyrimidine metabolism; UMP biosynthesis via de novo pathway; UMP from orotate: step 2/2. Functionally, catalyzes the decarboxylation of orotidine 5'-monophosphate (OMP) to uridine 5'-monophosphate (UMP). The sequence is that of Orotidine 5'-phosphate decarboxylase from Legionella pneumophila (strain Paris).